A 335-amino-acid polypeptide reads, in one-letter code: Tetraacyldisaccharide 4'-kinase (335 aa).

ATP is bound at residue 59–66 (TAGGNGKT).

It belongs to the LpxK family.

It carries out the reaction a lipid A disaccharide + ATP = a lipid IVA + ADP + H(+). The protein operates within glycolipid biosynthesis; lipid IV(A) biosynthesis; lipid IV(A) from (3R)-3-hydroxytetradecanoyl-[acyl-carrier-protein] and UDP-N-acetyl-alpha-D-glucosamine: step 6/6. Functionally, transfers the gamma-phosphate of ATP to the 4'-position of a tetraacyldisaccharide 1-phosphate intermediate (termed DS-1-P) to form tetraacyldisaccharide 1,4'-bis-phosphate (lipid IVA). The sequence is that of Tetraacyldisaccharide 4'-kinase from Aliivibrio salmonicida (strain LFI1238) (Vibrio salmonicida (strain LFI1238)).